The following is a 121-amino-acid chain: Large ribosomal subunit protein uL14c (121 aa).

The protein belongs to the universal ribosomal protein uL14 family. In terms of assembly, part of the 50S ribosomal subunit.

The protein localises to the plastid. Its subcellular location is the chloroplast. Binds to 23S rRNA. The protein is Large ribosomal subunit protein uL14c of Nephroselmis olivacea (Green alga).